Reading from the N-terminus, the 214-residue chain is Protein PAM68, chloroplastic (214 aa).

2 disordered regions span residues Met-1–Gln-26 and Ala-62–Val-111. The N-terminal 35 residues, Met-1–Arg-35, are a transit peptide targeting the chloroplast. At Asp-36–Met-124 the chain is on the stromal side. The span at Lys-75 to Lys-84 shows a compositional bias: basic residues. Acidic residues predominate over residues Ser-89–Glu-106. Residues Gly-125–Leu-145 form a helical membrane-spanning segment. At Lys-146–Asp-152 the chain is on the lumenal, thylakoid side. A helical transmembrane segment spans residues Val-153 to Val-173. Residues Ser-174–Arg-214 lie on the Stromal side of the membrane.

In terms of assembly, interacts with the PSII subunits psbA, psbB, psbC, psbD, psbH and psbI, but not with psbE, psbF or psbO. Interacts with the PSII assembly factors HCF136, LPA1, LPA2 and ALB3.

Its subcellular location is the plastid. It localises to the chloroplast thylakoid membrane. Functionally, involved in early steps in photosystem II (PSII) biogenesis and in maturation and stability of newly synthesized psbA protein. In Arabidopsis thaliana (Mouse-ear cress), this protein is Protein PAM68, chloroplastic (PAM68).